A 246-amino-acid chain; its full sequence is 14-3-3 protein beta/alpha (246 aa).

Methionine 1 is modified (N-acetylmethionine). Threonine 2 is subject to N-acetylthreonine; in 14-3-3 protein beta/alpha, N-terminally processed. Residue threonine 2 is modified to Phosphothreonine. Lysine 5 carries the N6-acetyllysine modification. Lysine 51 is subject to N6-acetyllysine; alternate. A Glycyl lysine isopeptide (Lys-Gly) (interchain with G-Cter in SUMO2); alternate cross-link involves residue lysine 51. Position 60 is a phosphoserine (serine 60). Residue lysine 70 is modified to N6-acetyllysine. Tyrosine 84 and tyrosine 106 each carry 3'-nitrotyrosine. An N6-acetyllysine modification is found at lysine 117. Serine 186 and serine 232 each carry phosphoserine.

It belongs to the 14-3-3 family. As to quaternary structure, homodimer. Interacts with SAMSN1 and PRKCE. Interacts with AKAP13. Interacts with SSH1 and TORC2/CRTC2. Interacts with ABL1; the interaction results in cytoplasmic location of ABL1 and inhibition of cABL-mediated apoptosis. Interacts with ROR2 (dimer); the interaction results in phosphorylation of YWHAB on tyrosine residues. Interacts with GAB2. Interacts with YAP1 (phosphorylated form). Interacts with the phosphorylated (by AKT1) form of SRPK2. Interacts with PKA-phosphorylated AANAT. Interacts with MYO1C. Interacts with SIRT2. Interacts with the 'Thr-369' phosphorylated form of DAPK2. Interacts with PI4KB, TBC1D22A and TBC1D22B. Interacts with the 'Ser-1134' and 'Ser-1161' phosphorylated form of SOS1. Interacts (via phosphorylated form) with YWHAB; this interaction occurs in a protein kinase AKT1-dependent manner. Interacts with SLITRK1. Interacts with SYNPO2 (phosphorylated form); YWHAB competes with ACTN2 for interaction with SYNPO2. Interacts with RIPOR2 (via phosphorylated form); this interaction occurs in a chemokine-dependent manner and does not compete for binding of RIPOR2 with RHOA nor blocks inhibition of RIPOR2-mediated RHOA activity. Interacts with MARK2 and MARK3. Interacts with TESK1; the interaction is dependent on the phosphorylation of TESK1 'Ser-439' and inhibits TESK1 kinase activity. Interacts with MEFV. Interacts with HDAC4. Interacts with ADAM22 (via C-terminus). Isoform alpha differs from isoform beta in being phosphorylated. Phosphorylated on Ser-60 by protein kinase C delta type catalytic subunit in a sphingosine-dependent fashion. In terms of processing, isoform Short contains a N-acetylmethionine at position 1.

It is found in the cytoplasm. The protein localises to the melanosome. Functionally, adapter protein implicated in the regulation of a large spectrum of both general and specialized signaling pathways. Binds to a large number of partners, usually by recognition of a phosphoserine or phosphothreonine motif. Binding generally results in the modulation of the activity of the binding partner. Negative regulator of osteogenesis. Blocks the nuclear translocation of the phosphorylated form (by AKT1) of SRPK2 and antagonizes its stimulatory effect on cyclin D1 expression resulting in blockage of neuronal apoptosis elicited by SRPK2. Negative regulator of signaling cascades that mediate activation of MAP kinases via AKAP13. This Mus musculus (Mouse) protein is 14-3-3 protein beta/alpha (Ywhab).